The following is a 341-amino-acid chain: HTH-type transcriptional repressor PurR (341 aa).

Residues 2–56 form the HTH lacI-type domain; the sequence is ATIKDVAKRANVSTTTVSHVINKTRFVSEETRNAVWAAIKELHYSPSAVARSLKV. The H-T-H motif DNA-binding region spans 4–23; sequence IKDVAKRANVSTTTVSHVIN. Residues 48-56 mediate DNA binding; it reads SAVARSLKV. Hypoxanthine is bound by residues Tyr-73, Arg-190, Thr-192, Phe-221, and Asp-275.

In terms of assembly, homodimer.

It functions in the pathway purine metabolism; purine nucleotide biosynthesis [regulation]. In terms of biological role, is the main repressor of the genes involved in the de novo synthesis of purine nucleotides, regulating purB, purC, purEK, purF, purHD, purL, purMN and guaBA expression. PurR is allosterically activated to bind its cognate DNA by binding the purine corepressors, hypoxanthine or guanine, thereby effecting transcription repression. The chain is HTH-type transcriptional repressor PurR from Escherichia coli O139:H28 (strain E24377A / ETEC).